A 447-amino-acid chain; its full sequence is Cellulosome-anchoring protein (447 aa).

Positions 1 to 29 are cleaved as a signal peptide; the sequence is MKRIKRILAVLTIFALLATINAFTFVSLA. Residues 30-180 form the Cohesin domain; that stretch reads QTNTIEIIIG…EIIEASAPEA (151 aa). The segment at 30–180 is receptor binding site for duplicated segment of CipA; it reads QTNTIEIIIG…EIIEASAPEA (151 aa). The segment at 177–247 is disordered; the sequence is APEATPTPGS…EHAPFLKGYP (71 aa). Residues 188 to 200 show a composition bias toward gly residues; sequence AGSGAGGGTGSSG. Positions 201–223 are enriched in low complexity; that stretch reads SGQPSATPTPTATEKPSTTPKTT. SLH domains follow at residues 216–280, 281–344, and 345–408; these read PSTT…AGKN, SSIT…EQGT, and DVKT…GAVL. The SLH 4; truncated domain maps to 409-429; that stretch reads EFTDVPVNYWAYKDIAEGVIY.

Its subcellular location is the secreted. The protein localises to the cell wall. The protein resides in the S-layer. Anchors the cellulosome to the cell surface by binding the duplicated segment that is present at the C-terminal end of CipA. The polypeptide is Cellulosome-anchoring protein (ancA) (Acetivibrio thermocellus (strain ATCC 27405 / DSM 1237 / JCM 9322 / NBRC 103400 / NCIMB 10682 / NRRL B-4536 / VPI 7372) (Clostridium thermocellum)).